We begin with the raw amino-acid sequence, 390 residues long: Tuftelin (390 aa).

2 coiled-coil regions span residues 88 to 126 (DKMT…KLDR) and 163 to 352 (PSMS…EKQV). Positions 356 to 383 (NFSTQARAKTENLGSVRISKPPSPKPMP) are disordered.

This sequence belongs to the tuftelin family. In terms of assembly, interacts with TFIP11. May form oligomers. In terms of tissue distribution, ameloblasts, and also non-odontogenic tissues including kidney, lung, liver and testis.

It is found in the secreted. In terms of biological role, involved in the structural organization of the epidermis. Involved in the mineralization and structural organization of enamel. The chain is Tuftelin (Tuft1) from Mus musculus (Mouse).